The chain runs to 77 residues: Large ribosomal subunit protein eL20 (77 aa).

It belongs to the eukaryotic ribosomal protein eL20 family. As to quaternary structure, part of the 50S ribosomal subunit. Binds 23S rRNA.

The sequence is that of Large ribosomal subunit protein eL20 from Thermococcus kodakarensis (strain ATCC BAA-918 / JCM 12380 / KOD1) (Pyrococcus kodakaraensis (strain KOD1)).